Reading from the N-terminus, the 489-residue chain is MNGTMDHPDHPDPDSIKMFVGQVPRSWSEKELRELFEQYGAVYEINVLRDRSQNPPQSKGCCFITFYTRKAALEAQNALHNMKVLPGMHHPIQMKPADSEKNNAVEDRKLFIGMVSKNCNENDIRAMFSPFGQIEECRILRGPDGMSRGCAFVTFTTRSMAQMAIKSMHQAQTMEGCSSPIVVKFADTQKDKEQKRMTQQLQQQMQQLNAASMWGNLTGLNSLAPQYLALLQQTASSGNLNSLSGLHPMGAEYGTGMTSGLNAIQLQNLAALAAAASAAQNTPSAGAALTSSSSPLSILTSSGSSPSSNNSSINTMASLGALQTLAGATAGLNVNSLAGMAAFNGGLGSSLSNGTGSTMEALSQAYSGIQQYAAAALPSLYNQSLLSQQGLGAAGSQKEGPEGANLFIYHLPQEFGDQDLLQMFMPFGNVVSSKVFIDKQTNLSKCFGFVSYDNPVSAQAAIQSMNGFQIGMKRLKVQLKRSKNDSKPY.

RRM domains follow at residues isoleucine 16–serine 99, arginine 108–threonine 188, and alanine 404–serine 482. The tract at residues valine 183–alanine 210 is necessary for oligomerization and EDEN-dependent deadenylation.

The protein belongs to the CELF/BRUNOL family. In terms of assembly, oligomer. Oligomerization is required for RNA-binding and EDEN-dependent deadenylation. In terms of processing, phosphorylated during oocyte maturation and dephosphorylated following egg activation. Dephosphorylation is calcium dependent and correlates with the increase in the activity of EDEN-dependent deadenylation.

The protein resides in the nucleus. The protein localises to the cytoplasm. Functionally, RNA-binding protein implicated in the regulation of several post-transcriptional events. May be involved in pre-mRNA alternative splicing, mRNA translation activation and stability. Mediates the rapid and sequence-specific cytoplasmic deadenylation of EDEN-containing maternal mRNAs following fertilization. Binds to AU-rich sequences (AREs) of jun mRNA. Binds to the embryonic deadenylation element (EDEN) motif localized in the 3'-UTR of maternal mRNAs. Binds to RNA containing several repeats of the consensus sequence 5'-UGU-3'. EDEN-dependent deadenylation is enhanced by the presence of an additional cis element composed of three AUU repeats. This Xenopus laevis (African clawed frog) protein is CUGBP Elav-like family member 1-A (cugbp1-a).